Consider the following 111-residue polypeptide: Dynein light chain Tctex-type (111 aa).

Belongs to the dynein light chain Tctex-type family.

It is found in the cytoplasm. The protein localises to the cytoskeleton. Functionally, acts as a non-catalytic accessory component of a dynein complex. This chain is Dynein light chain Tctex-type (dlcA), found in Dictyostelium discoideum (Social amoeba).